The sequence spans 82 residues: Protein ImpC (82 aa).

It belongs to the DinI family.

Functionally, the imp operon is involved in UV protection and mutation, however the ImpC protein is not essential for these functions. This Salmonella typhimurium protein is Protein ImpC (impC).